The chain runs to 303 residues: Glycine--tRNA ligase alpha subunit (303 aa).

Belongs to the class-II aminoacyl-tRNA synthetase family. Tetramer of two alpha and two beta subunits.

Its subcellular location is the cytoplasm. It carries out the reaction tRNA(Gly) + glycine + ATP = glycyl-tRNA(Gly) + AMP + diphosphate. The sequence is that of Glycine--tRNA ligase alpha subunit from Syntrophomonas wolfei subsp. wolfei (strain DSM 2245B / Goettingen).